A 213-amino-acid chain; its full sequence is ATP-dependent Clp protease proteolytic subunit (213 aa).

Catalysis depends on S114, which acts as the Nucleophile. Residue H139 is part of the active site.

Belongs to the peptidase S14 family. In terms of assembly, fourteen ClpP subunits assemble into 2 heptameric rings which stack back to back to give a disk-like structure with a central cavity, resembling the structure of eukaryotic proteasomes.

The protein localises to the cytoplasm. The enzyme catalyses Hydrolysis of proteins to small peptides in the presence of ATP and magnesium. alpha-casein is the usual test substrate. In the absence of ATP, only oligopeptides shorter than five residues are hydrolyzed (such as succinyl-Leu-Tyr-|-NHMec, and Leu-Tyr-Leu-|-Tyr-Trp, in which cleavage of the -Tyr-|-Leu- and -Tyr-|-Trp bonds also occurs).. Its function is as follows. Cleaves peptides in various proteins in a process that requires ATP hydrolysis. Has a chymotrypsin-like activity. Plays a major role in the degradation of misfolded proteins. The polypeptide is ATP-dependent Clp protease proteolytic subunit (Pseudomonas entomophila (strain L48)).